A 259-amino-acid polypeptide reads, in one-letter code: Sphinganine C4-monooxygenase 2 (259 aa).

The next 3 helical transmembrane spans lie at 10–30 (FLGTFVPILVYWVYSGMYICL), 54–74 (AVVKGVLLQQTLQAIISVILF), and 91–111 (ILLLARQFIIAMLVIDTWQYF). A Fatty acid hydroxylase domain is found at 98–234 (FIIAMLVIDT…FVMWDRILGT (137 aa)). Positions 113–117 (HRYMH) match the Histidine box-1 motif. Positions 127-131 (HSQHH) match the Histidine box-2 motif. The short motif at 206–212 (YHDVHHQ) is the Histidine box-3 element.

The protein belongs to the sterol desaturase family. The cofactor is Fe cation. Ubiquitous, with higher levels in flowers and roots.

It is found in the endoplasmic reticulum membrane. It catalyses the reaction a dihydroceramide + 2 Fe(II)-[cytochrome b5] + O2 + 2 H(+) = a phytoceramide + 2 Fe(III)-[cytochrome b5] + H2O. The protein operates within membrane lipid metabolism; sphingolipid biosynthesis. Functionally, involved in sphingolipid trihydroxy long-chain base (4-hydroxysphinganine) biosynthesis. Can use C18- and C20-sphinganine as substrates to produce C18- and C20-phytosphinganines (D-ribo-2-amino-1,3,4-trihydroxyoctadecane and -eicosane). The sequence is that of Sphinganine C4-monooxygenase 2 (SBH2) from Arabidopsis thaliana (Mouse-ear cress).